The primary structure comprises 206 residues: Adenylate kinase (206 aa).

Position 10-15 (Gly-10–Thr-15) interacts with ATP. The NMP stretch occupies residues Ser-30–Val-59. AMP is bound by residues Thr-31, Arg-36, Gly-57–Val-59, Gly-85–Arg-88, and Gln-92. Positions Asn-126 to Asp-142 are LID. Arg-127 is an ATP binding site. The AMP site is built by Arg-139 and Arg-150. Met-178 is a binding site for ATP.

Belongs to the adenylate kinase family. As to quaternary structure, monomer.

The protein localises to the cytoplasm. The enzyme catalyses AMP + ATP = 2 ADP. It functions in the pathway purine metabolism; AMP biosynthesis via salvage pathway; AMP from ADP: step 1/1. In terms of biological role, catalyzes the reversible transfer of the terminal phosphate group between ATP and AMP. Plays an important role in cellular energy homeostasis and in adenine nucleotide metabolism. The chain is Adenylate kinase from Nitrobacter winogradskyi (strain ATCC 25391 / DSM 10237 / CIP 104748 / NCIMB 11846 / Nb-255).